The primary structure comprises 409 residues: Probable tRNA N6-adenosine threonylcarbamoyltransferase, mitochondrial (409 aa).

A mitochondrion-targeting transit peptide spans Met1–Glu31. Positions 135 and 139 each coordinate a divalent metal cation. Substrate is bound by residues Leu159 to Gly163, Asp192, Gly212, Glu216, Asn322 to Asn323, and Ser350. Asp351 provides a ligand contact to a divalent metal cation.

It belongs to the KAE1 / TsaD family. In terms of assembly, homodimer. The cofactor is a divalent metal cation.

It localises to the mitochondrion. It carries out the reaction L-threonylcarbamoyladenylate + adenosine(37) in tRNA = N(6)-L-threonylcarbamoyladenosine(37) in tRNA + AMP + H(+). Required for the formation of a threonylcarbamoyl group on adenosine at position 37 (t(6)A37) in mitochondrial tRNAs that read codons beginning with adenine. Probably involved in the transfer of the threonylcarbamoyl moiety of threonylcarbamoyl-AMP (TC-AMP) to the N6 group of A37. Involved in mitochondrial genome maintenance. The sequence is that of Probable tRNA N6-adenosine threonylcarbamoyltransferase, mitochondrial from Drosophila melanogaster (Fruit fly).